A 1357-amino-acid chain; its full sequence is DNA-directed RNA polymerase subunit beta (1357 aa).

Belongs to the RNA polymerase beta chain family. In terms of assembly, the RNAP catalytic core consists of 2 alpha, 1 beta, 1 beta' and 1 omega subunit. When a sigma factor is associated with the core the holoenzyme is formed, which can initiate transcription.

It catalyses the reaction RNA(n) + a ribonucleoside 5'-triphosphate = RNA(n+1) + diphosphate. Functionally, DNA-dependent RNA polymerase catalyzes the transcription of DNA into RNA using the four ribonucleoside triphosphates as substrates. In Pseudomonas aeruginosa (strain ATCC 15692 / DSM 22644 / CIP 104116 / JCM 14847 / LMG 12228 / 1C / PRS 101 / PAO1), this protein is DNA-directed RNA polymerase subunit beta.